We begin with the raw amino-acid sequence, 346 residues long: Putative D-xylulose reductase (346 aa).

Zn(2+) contacts are provided by C39, H64, and E150.

Belongs to the zinc-containing alcohol dehydrogenase family. It depends on Zn(2+) as a cofactor.

The catalysed reaction is xylitol + NAD(+) = D-xylulose + NADH + H(+). The polypeptide is Putative D-xylulose reductase (Rhizobium meliloti (strain 1021) (Ensifer meliloti)).